The chain runs to 486 residues: Na(+)/H(+) antiporter NhaA 2 (486 aa).

A run of 11 helical transmembrane segments spans residues 58 to 78 (GGLL…TAPG), 102 to 122 (LTDW…GLEL), 138 to 158 (ALPV…CLAL), 168 to 188 (AWAI…SLAG), 198 to 218 (VLLG…ALGL), 220 to 240 (HGIN…TALA), 260 to 280 (ISLH…GLLV), 300 to 320 (LGPI…TGVS), 338 to 358 (VAVG…WLAV), 374 to 394 (LVPL…ITRL), and 404 to 424 (GAST…LTAL). Positions 432 to 486 (GAPATRGSSRPATQVGGVAGPIPQTRRESDGGPTGGQEPPPARVRRAPPASPHPR) are disordered.

It belongs to the NhaA Na(+)/H(+) (TC 2.A.33) antiporter family.

The protein localises to the cell membrane. It carries out the reaction Na(+)(in) + 2 H(+)(out) = Na(+)(out) + 2 H(+)(in). Functionally, na(+)/H(+) antiporter that extrudes sodium in exchange for external protons. This chain is Na(+)/H(+) antiporter NhaA 2, found in Frankia alni (strain DSM 45986 / CECT 9034 / ACN14a).